We begin with the raw amino-acid sequence, 218 residues long: Thiamine-phosphate synthase (218 aa).

Residues 43–47 (QFRDK) and Asn78 contribute to the 4-amino-2-methyl-5-(diphosphooxymethyl)pyrimidine site. Mg(2+) is bound by residues Asp79 and Asp98. Ser117 lines the 4-amino-2-methyl-5-(diphosphooxymethyl)pyrimidine pocket. 143–145 (TNS) serves as a coordination point for 2-[(2R,5Z)-2-carboxy-4-methylthiazol-5(2H)-ylidene]ethyl phosphate. Lys146 lines the 4-amino-2-methyl-5-(diphosphooxymethyl)pyrimidine pocket. Residues Gly174 and 194 to 195 (IS) each bind 2-[(2R,5Z)-2-carboxy-4-methylthiazol-5(2H)-ylidene]ethyl phosphate.

The protein belongs to the thiamine-phosphate synthase family. Requires Mg(2+) as cofactor.

The enzyme catalyses 2-[(2R,5Z)-2-carboxy-4-methylthiazol-5(2H)-ylidene]ethyl phosphate + 4-amino-2-methyl-5-(diphosphooxymethyl)pyrimidine + 2 H(+) = thiamine phosphate + CO2 + diphosphate. The catalysed reaction is 2-(2-carboxy-4-methylthiazol-5-yl)ethyl phosphate + 4-amino-2-methyl-5-(diphosphooxymethyl)pyrimidine + 2 H(+) = thiamine phosphate + CO2 + diphosphate. It catalyses the reaction 4-methyl-5-(2-phosphooxyethyl)-thiazole + 4-amino-2-methyl-5-(diphosphooxymethyl)pyrimidine + H(+) = thiamine phosphate + diphosphate. It functions in the pathway cofactor biosynthesis; thiamine diphosphate biosynthesis; thiamine phosphate from 4-amino-2-methyl-5-diphosphomethylpyrimidine and 4-methyl-5-(2-phosphoethyl)-thiazole: step 1/1. In terms of biological role, condenses 4-methyl-5-(beta-hydroxyethyl)thiazole monophosphate (THZ-P) and 2-methyl-4-amino-5-hydroxymethyl pyrimidine pyrophosphate (HMP-PP) to form thiamine monophosphate (TMP). In Lactococcus lactis subsp. cremoris (strain SK11), this protein is Thiamine-phosphate synthase.